Reading from the N-terminus, the 185-residue chain is Ribosome-recycling factor (185 aa).

This sequence belongs to the RRF family.

It is found in the cytoplasm. Its function is as follows. Responsible for the release of ribosomes from messenger RNA at the termination of protein biosynthesis. May increase the efficiency of translation by recycling ribosomes from one round of translation to another. The chain is Ribosome-recycling factor from Pseudomonas aeruginosa (strain LESB58).